The primary structure comprises 892 residues: MTDVTVKSLAAEIQTPVDRLVQQFADAGIKKSDVDSVTQQEKEILLAHLNREHGSVPNKLTLQRKTRSTLNIPSTGGKSKSVQIEVRKKRTYVNTPEAEQAKAEEQAQREAEEQAQREAEATAQKIAEEKAKREAEEQAKREAAEKAKRQAAEKEKVTNQQTDEKTKPAQTDKARREAEAAELKRSVEEETRRKVEEDAKRVAEEARKMAAENEGKWPEPVAEQTESADYHVTTSQHARAAEDENDAKVEGDRRSRTRGGKATKQKKGNKLSESKADREEARAVGRKGKRKPSTLQQSFNKPVVAVNRDVVIGETVTVAELANKMAVKGSQVIKAMMKLGAMATINQVIDQETAQLVAEEMGHKVILRRENELEEALMSDRDIGVEAAAEHRAPVVTIMGHVDHGKTSLLDYIRSTKVASGEAGGITQHIGAYHVETENGMITFLDTPGHAAFTSMRARGAQATDIVVLVVAADDGVMPQTIEAIQHAKAANVPVVVAVNKIDKPEADPDRVKTELSQYGIQPEEWGGESQFINVSAKAGIGIDELLNAILLQAEVLELKAVRTGMANGVVIESFLDKGRGPVATVLVQQGTLNKGDIVLCGFEYGRVRAMRDELGRDITSAGPSIPVEILGLSSVPAAGDEVTVVRDEKKAREVALYRQGKFREVKLARQQKSKLENMFANMTEGEVSELNIVIKSDVQGSCEAICDSLEKLSTDEVKVRIVGSGVGGITETDATLAAASGAIILGFNVRADASARRVVETEGLDLRYYSVIYSLIDEVKQAMSGMLAPEYKQQIIGLAEVRDVFKSPKFGAIAGCMVTEGVIKRNNPIRVLRDNVVIYEGELESLRRFKDDVSEVRNGMECGIGVKNYNDVRTGDVIEVFEIIEIKRTIA.

A disordered region spans residues 65-296 (KTRSTLNIPS…KGKRKPSTLQ (232 aa)). Polar residues predominate over residues 68–82 (STLNIPSTGGKSKSV). The segment covering 99–217 (EQAKAEEQAQ…KMAAENEGKW (119 aa)) has biased composition (basic and acidic residues). Residues 224–237 (QTESADYHVTTSQH) show a composition bias toward polar residues. The span at 239–254 (RAAEDENDAKVEGDRR) shows a compositional bias: basic and acidic residues. Basic residues predominate over residues 255-269 (SRTRGGKATKQKKGN). Residues 270–283 (KLSESKADREEARA) show a composition bias toward basic and acidic residues. A tr-type G domain is found at 391 to 560 (HRAPVVTIMG…LLQAEVLELK (170 aa)). A G1 region spans residues 400 to 407 (GHVDHGKT). 400–407 (GHVDHGKT) serves as a coordination point for GTP. Residues 425–429 (GITQH) form a G2 region. Residues 446–449 (DTPG) form a G3 region. Residues 446–450 (DTPGH) and 500–503 (NKID) each bind GTP. The G4 stretch occupies residues 500–503 (NKID). Residues 536 to 538 (SAK) are G5.

This sequence belongs to the TRAFAC class translation factor GTPase superfamily. Classic translation factor GTPase family. IF-2 subfamily.

Its subcellular location is the cytoplasm. Functionally, one of the essential components for the initiation of protein synthesis. Protects formylmethionyl-tRNA from spontaneous hydrolysis and promotes its binding to the 30S ribosomal subunits. Also involved in the hydrolysis of GTP during the formation of the 70S ribosomal complex. This is Translation initiation factor IF-2 from Yersinia pseudotuberculosis serotype O:1b (strain IP 31758).